The primary structure comprises 2383 residues: Reducing polyketide synthase rdc5 (2383 aa).

The Ketosynthase family 3 (KS3) domain occupies 10–438 (RAPIAIIGMS…GTNAHLVLER (429 aa)). Active-site for beta-ketoacyl synthase activity residues include cysteine 186, histidine 321, and histidine 361. The malonyl-CoA:ACP transacylase (MAT) domain stretch occupies residues 550 to 881 (FVFTGQGAQW…GFAAELFRRG (332 aa)). The tract at residues 930 to 1066 (KSLIGAERPS…GLFSINYEDS (137 aa)) is N-terminal hotdog fold. The PKS/mFAS DH domain occupies 930-1253 (KSLIGAERPS…LAELEVEDAD (324 aa)). The interval 932-1250 (LIGAERPSLD…DFHLAELEVE (319 aa)) is dehydratase (DH) domain. Histidine 962 acts as the Proton acceptor; for dehydratase activity in catalysis. Residues 1094–1253 (VEVISKQAFY…LAELEVEDAD (160 aa)) form a C-terminal hotdog fold region. Residue aspartate 1160 is the Proton donor; for dehydratase activity of the active site. Positions 1663-1977 (GLLNTLHFVS…QGKHVGKMIL (315 aa)) are enoyl reductase (ER) domain. Cysteine 1776 (phosphocysteine intermediate) is an active-site residue. The interval 2002–2182 (ATYLFIGGLG…VSVNLGIMRD (181 aa)) is ketoreductase (KR) domain. Residues 2300–2377 (AAGPIITKAL…QFAVQIAKKS (78 aa)) enclose the Carrier domain. Serine 2337 bears the O-(pantetheine 4'-phosphoryl)serine mark.

Its pathway is secondary metabolite biosynthesis. Reducing polyketide synthase; part of the gene cluster that mediates the biosynthesis of radicicol, a resorcylic acid lactone (RAL) that irreversibly inhibits the HSP90 molecular chaperone, an important target for cancer chemotherapy. The radicicol cluster encodes only two apparent post-PKS enzymes, a cytochrome P450 monooxygenase (rdc4) and a non-heme halogenase (rdc2) that could introduce the epoxide and the chlorine, respectively. If this cluster includes all the genes required for radicicol biosynthesis, the remaining structural features of radicicol are presumably generated by the PKSs rdc1 and rdc5. The C-2' ketone could arise if the R-PKS rdc5 and NR-PKS rdc1 each carry out four iterations, in contrast to the five iteration-three iteration split for the hypothemycin PKSs. The origin of the cis 5',6' double bond is not known. The radicicol R-PKS rdc5 ER domain may catalyze either double bond isomerization or reduction in the third iteration. The protein is Reducing polyketide synthase rdc5 of Metacordyceps chlamydosporia (Nematophagous fungus).